A 398-amino-acid polypeptide reads, in one-letter code: 1-deoxy-D-xylulose 5-phosphate reductoisomerase (398 aa).

NADPH is bound by residues T10, G11, S12, I13, N38, and N124. K125 is a binding site for 1-deoxy-D-xylulose 5-phosphate. E126 provides a ligand contact to NADPH. D150 is a binding site for Mn(2+). Residues S151, E152, S186, and H209 each coordinate 1-deoxy-D-xylulose 5-phosphate. E152 contacts Mn(2+). Residue G215 coordinates NADPH. Positions 222, 227, 228, and 231 each coordinate 1-deoxy-D-xylulose 5-phosphate. E231 contributes to the Mn(2+) binding site.

This sequence belongs to the DXR family. Mg(2+) serves as cofactor. It depends on Mn(2+) as a cofactor.

It carries out the reaction 2-C-methyl-D-erythritol 4-phosphate + NADP(+) = 1-deoxy-D-xylulose 5-phosphate + NADPH + H(+). It participates in isoprenoid biosynthesis; isopentenyl diphosphate biosynthesis via DXP pathway; isopentenyl diphosphate from 1-deoxy-D-xylulose 5-phosphate: step 1/6. Functionally, catalyzes the NADPH-dependent rearrangement and reduction of 1-deoxy-D-xylulose-5-phosphate (DXP) to 2-C-methyl-D-erythritol 4-phosphate (MEP). This is 1-deoxy-D-xylulose 5-phosphate reductoisomerase from Baumannia cicadellinicola subsp. Homalodisca coagulata.